Here is a 365-residue protein sequence, read N- to C-terminus: MTARVSADLPRTLLVMAGGTGGHIFPALSVARLLAARGWQVVWLGNASGMEGQLVPKHGFPLESVRFGGVRGKGLVTKFLLPLNLLRAFWQSLGVVRRVRPNVVLGMGGYITFPGGMMSVLLGAPLVLHEQNSIAGLANRVLARVADRVLCAFPGALPGAEWVGNPIRADLAALPSPQARYAERSGPLRVLVVGGSLGAAALNDVVPRALALLPADTRPIVIHQAGAKQIDTLRANYAAVGIDETHAQAVPFIDDMAAAYAQADLVICRAGAMTVSEVAAAGVAALFVPFPHAVDDHQTTNARFLSERGAALLVPQPSLGPASLADTLASLTRAQLADMAAKAREQARPEAAERVADICVAAARA.

UDP-N-acetyl-alpha-D-glucosamine contacts are provided by residues 20-22 (TGG), Asn-132, Arg-168, Ser-196, Ile-253, and Gln-298.

The protein belongs to the glycosyltransferase 28 family. MurG subfamily.

The protein localises to the cell inner membrane. It carries out the reaction di-trans,octa-cis-undecaprenyl diphospho-N-acetyl-alpha-D-muramoyl-L-alanyl-D-glutamyl-meso-2,6-diaminopimeloyl-D-alanyl-D-alanine + UDP-N-acetyl-alpha-D-glucosamine = di-trans,octa-cis-undecaprenyl diphospho-[N-acetyl-alpha-D-glucosaminyl-(1-&gt;4)]-N-acetyl-alpha-D-muramoyl-L-alanyl-D-glutamyl-meso-2,6-diaminopimeloyl-D-alanyl-D-alanine + UDP + H(+). It functions in the pathway cell wall biogenesis; peptidoglycan biosynthesis. Cell wall formation. Catalyzes the transfer of a GlcNAc subunit on undecaprenyl-pyrophosphoryl-MurNAc-pentapeptide (lipid intermediate I) to form undecaprenyl-pyrophosphoryl-MurNAc-(pentapeptide)GlcNAc (lipid intermediate II). This Ralstonia nicotianae (strain ATCC BAA-1114 / GMI1000) (Ralstonia solanacearum) protein is UDP-N-acetylglucosamine--N-acetylmuramyl-(pentapeptide) pyrophosphoryl-undecaprenol N-acetylglucosamine transferase.